A 603-amino-acid polypeptide reads, in one-letter code: Isovalerate--CoA ligase AAE2 (603 aa).

Belongs to the ATP-dependent AMP-binding enzyme family. Expressed at low levels in leaves, flowers and developing seeds.

It carries out the reaction 3-methylbutanoate + ATP + CoA = 3-methylbutanoyl-CoA + AMP + diphosphate. The enzyme catalyses hexanoate + ATP + CoA = hexanoyl-CoA + AMP + diphosphate. It catalyses the reaction butanoate + ATP + CoA = butanoyl-CoA + AMP + diphosphate. The catalysed reaction is pentanoate + ATP + CoA = pentanoyl-CoA + AMP + diphosphate. It carries out the reaction 3-methylpentanoate + ATP + CoA = 3-methylpentanoyl-CoA + AMP + diphosphate. The enzyme catalyses 4-methylpentanoate + ATP + CoA = 4-methylpentanoyl-CoA + AMP + diphosphate. In terms of biological role, catalyzes the ligation of CoA on isovalerate to produce 3-methylbutanoyl-CoA. Can also use butanoate, pentanoate, hexanoate, 3-methylpentanoate and 4-methylpentanoate as substrates with a lower efficiency. This Arabidopsis thaliana (Mouse-ear cress) protein is Isovalerate--CoA ligase AAE2.